A 112-amino-acid chain; its full sequence is Beta-defensin 126 (112 aa).

An N-terminal signal peptide occupies residues 1–20; that stretch reads MKSLLFTLAVFMLLAQLVSG. An in vitro binds to LPS, mediates antimicrobial activity and inhibits LPS-mediated inflammation region spans residues 21–63; the sequence is NWYVKKCLNDVGICKKKCKPEELHVKNGRAMCGKQRDCCVPAD. 3 disulfides stabilise this stretch: Cys27-Cys58, Cys34-Cys52, and Cys38-Cys59.

It belongs to the beta-defensin family. Homodimer or homooligomer; disulfide-linked. In terms of processing, O-glycosylated; glycans contain alpha(2,3)-linked sialic acids.

Its subcellular location is the secreted. Its function is as follows. Highly glycosylated atypical beta-defensin involved in several aspects of sperm function. Facilitates sperm transport in the female reproductive tract and contributes to sperm protection against immunodetection; both functions are probably implicating the negative surface charge provided by its O-linked oligosaccharides in the sperm glycocalyx. Involved in binding of sperm to oviductal epithelial cells to form a sperm reservoir until ovulation. Release from the sperm surface during capacitation and ovaluation by an elevation of oviductal fluid pH is unmasking other surface components and allows sperm to penetrate the cumulus matrix and bind to the zona pellucida of the oocyte. In vitro has antimicrobial activity and may inhibit LPS-mediated inflammation. In Hylobates lar (Lar gibbon), this protein is Beta-defensin 126 (DEFB126).